Reading from the N-terminus, the 393-residue chain is S-adenosylmethionine decarboxylase proenzyme (393 aa).

Residues E11 and E14 contribute to the active site. The active-site Schiff-base intermediate with substrate; via pyruvic acid is the S71. A Pyruvic acid (Ser); by autocatalysis modification is found at S71. C85 (proton donor; for catalytic activity) is an active-site residue. Catalysis depends on proton acceptor; for processing activity residues S236 and H249.

It belongs to the eukaryotic AdoMetDC family. Pyruvate is required as a cofactor. Post-translationally, is synthesized initially as an inactive proenzyme. Formation of the active enzyme involves a self-maturation process in which the active site pyruvoyl group is generated from an internal serine residue via an autocatalytic post-translational modification. Two non-identical subunits are generated from the proenzyme in this reaction, and the pyruvate is formed at the N-terminus of the alpha chain, which is derived from the carboxyl end of the proenzyme. The post-translation cleavage follows an unusual pathway, termed non-hydrolytic serinolysis, in which the side chain hydroxyl group of the serine supplies its oxygen atom to form the C-terminus of the beta chain, while the remainder of the serine residue undergoes an oxidative deamination to produce ammonia and the pyruvoyl group blocking the N-terminus of the alpha chain.

The catalysed reaction is S-adenosyl-L-methionine + H(+) = S-adenosyl 3-(methylsulfanyl)propylamine + CO2. It functions in the pathway amine and polyamine biosynthesis; S-adenosylmethioninamine biosynthesis; S-adenosylmethioninamine from S-adenosyl-L-methionine: step 1/1. In Hordeum chilense (Barley), this protein is S-adenosylmethionine decarboxylase proenzyme (SAMDC).